The primary structure comprises 305 residues: GMP synthase [glutamine-hydrolyzing] subunit B (305 aa).

Residues 2–185 (VNVDEFIEEA…LDLEEIISER (184 aa)) form the GMPS ATP-PPase domain. 29–35 (SGGVDSS) is a binding site for ATP.

As to quaternary structure, heterodimer composed of a glutamine amidotransferase subunit (A) and a GMP-binding subunit (B).

It catalyses the reaction XMP + L-glutamine + ATP + H2O = GMP + L-glutamate + AMP + diphosphate + 2 H(+). The protein operates within purine metabolism; GMP biosynthesis; GMP from XMP (L-Gln route): step 1/1. In terms of biological role, catalyzes the synthesis of GMP from XMP. The sequence is that of GMP synthase [glutamine-hydrolyzing] subunit B from Haloarcula marismortui (strain ATCC 43049 / DSM 3752 / JCM 8966 / VKM B-1809) (Halobacterium marismortui).